We begin with the raw amino-acid sequence, 237 residues long: Ribonuclease PH (237 aa).

Residues arginine 86 and glycine 124–arginine 126 each bind phosphate.

This sequence belongs to the RNase PH family. In terms of assembly, homohexameric ring arranged as a trimer of dimers.

The enzyme catalyses tRNA(n+1) + phosphate = tRNA(n) + a ribonucleoside 5'-diphosphate. Its function is as follows. Phosphorolytic 3'-5' exoribonuclease that plays an important role in tRNA 3'-end maturation. Removes nucleotide residues following the 3'-CCA terminus of tRNAs; can also add nucleotides to the ends of RNA molecules by using nucleoside diphosphates as substrates, but this may not be physiologically important. Probably plays a role in initiation of 16S rRNA degradation (leading to ribosome degradation) during starvation. The polypeptide is Ribonuclease PH (Bradyrhizobium diazoefficiens (strain JCM 10833 / BCRC 13528 / IAM 13628 / NBRC 14792 / USDA 110)).